A 53-amino-acid polypeptide reads, in one-letter code: Large ribosomal subunit protein bL33A (53 aa).

Belongs to the bacterial ribosomal protein bL33 family.

The polypeptide is Large ribosomal subunit protein bL33A (Mycoplasmoides gallisepticum (strain R(low / passage 15 / clone 2)) (Mycoplasma gallisepticum)).